Reading from the N-terminus, the 598-residue chain is MNSHYLTLIMNSGALLTIIVLLPPIIMPKPSMILTTKLVKISMFISLIPLTIYLNENMETTLTMKPWMDWALFNIALSFKIDKYTVIFTPIALMITWSIMEFSQWYMAKERHMDKFFKYLLLFLITMITFISANNLLQLFIGWEGVGIMSFLLISWWSGRTKANISALQAVAYNRIGDIGLMMSMVWMCSNTNSWDLQQITMLLSDQQYLIPTLGFLIAATGKSAQFGLHPWLPAAMEGPTPVSALLHSSTMVVAGVFLLIRLHPLFQNYPLMLEMTLCLGAMTTICAALCATTQNDIKKIIAFSTSSQLGLMMVAVGLNHPHIAFLHMCTHAFFKAMLFLCSGSIIHNMNNEQDIRKFSCLNNNLPLTTTCMTIGSAALMGLPFLAGFFTKDLILEALNTSYTNAWALMVTLMAVTLTTAYSSRLIIMSASGTPRYLPLTPTHENNFIKNPLKRLAWGSLISGLILTSTLPPMKPQIFTMPTYIKTIALMMFIISLIISMELTNKKINQTTFSFFTQLAFYPHIIHRLTSHLSLIWSQKLMTQVMDVSWLEKIGPKGLANHQLKPSTTLTEAHHLNSATLPLMAFALTLITLSLTAR.

14 helical membrane passes run 6 to 26 (LTLI…PPII), 32 to 52 (MILT…PLTI), 84 to 100 (YTVI…WSIM), 113 to 133 (MDKF…FISA), 136 to 156 (LLQL…LISW), 241 to 261 (TPVS…FLLI), 272 to 292 (LMLE…ALCA), 301 to 320 (IIAF…VGLN), 325 to 347 (AFLH…GSII), 370 to 390 (TTCM…AGFF), 409 to 429 (LMVT…LIIM), 456 to 476 (LAWG…PMKP), 478 to 498 (IFTM…ISLI), and 576 to 596 (LNSA…LSLT).

Belongs to the complex I subunit 5 family.

It localises to the mitochondrion inner membrane. The catalysed reaction is a ubiquinone + NADH + 5 H(+)(in) = a ubiquinol + NAD(+) + 4 H(+)(out). Its function is as follows. Core subunit of the mitochondrial membrane respiratory chain NADH dehydrogenase (Complex I) that is believed to belong to the minimal assembly required for catalysis. Complex I functions in the transfer of electrons from NADH to the respiratory chain. The immediate electron acceptor for the enzyme is believed to be ubiquinone. This is NADH-ubiquinone oxidoreductase chain 5 (MT-ND5) from Petromyzon marinus (Sea lamprey).